A 266-amino-acid chain; its full sequence is Interleukin-33 (266 aa).

The segment at 1–67 (MRPRMKYSNS…ETSYFRKEPT (67 aa)) is homeodomain-like HTH domain. A propeptide spanning residues 1-101 (MRPRMKYSNS…RSLLGSIQAF (101 aa)) is cleaved from the precursor. Residues 66–108 (PTKRYSLKSGTKHEENFSAYPRDSRKRSLLGSIQAFAASVDTL) are interaction with RELA.

The protein belongs to the IL-1 family. Highly divergent. As to quaternary structure, (Microbial infection) Interacts (in reduced form) with H.polygyrus ARI; the interaction abolishes the interaction with its primary receptor IL1RL1. In terms of assembly, forms a 1:1:1 heterotrimeric complex with its primary high-affinity receptor IL1RL1 and the coreceptor IL1RAP. Interacts with cargo receptor TMED10; the interaction mediates the translocation from the cytoplasm into the ERGIC (endoplasmic reticulum-Golgi intermediate compartment) and thereby secretion. Post-translationally, the full-length protein can be released from cells and is able to signal via the IL1RL1/ST2 receptor. However, proteolytic processing by CELA1, CSTG/cathepsin G and ELANE/neutrophil elastase produces C-terminal peptides that are more active than the unprocessed full-length protein. May also be proteolytically processed by calpains. Proteolytic cleavage mediated by apoptotic caspases including CASP3 and CASP7 results in IL33 inactivation. In vitro proteolytic cleavage by CASP1 was reported but could not be confirmed in vivo suggesting that IL33 is probably not a direct substrate for that caspase.

It localises to the nucleus. The protein localises to the chromosome. It is found in the cytoplasm. The protein resides in the cytoplasmic vesicle. Its subcellular location is the secretory vesicle. It localises to the secreted. Its function is as follows. Cytokine that binds to and signals through the IL1RL1/ST2 receptor which in turn activates NF-kappa-B and MAPK signaling pathways in target cells. Involved in the maturation of Th2 cells inducing the secretion of T-helper type 2-associated cytokines. Also involved in activation of mast cells, basophils, eosinophils and natural killer cells. Acts as an enhancer of polarization of alternatively activated macrophages. Acts as a chemoattractant for Th2 cells, and may function as an 'alarmin', that amplifies immune responses during tissue injury. Induces rapid UCP2-dependent mitochondrial rewiring that attenuates the generation of reactive oxygen species and preserves the integrity of Krebs cycle required for persistent production of itaconate and subsequent GATA3-dependent differentiation of inflammation-resolving alternatively activated macrophages. In terms of biological role, in quiescent endothelia the uncleaved form is constitutively and abundantly expressed, and acts as a chromatin-associated nuclear factor with transcriptional repressor properties, it may sequester nuclear NF-kappaB/RELA, lowering expression of its targets. This form is rapidely lost upon angiogenic or pro-inflammatory activation. The polypeptide is Interleukin-33 (Mus musculus (Mouse)).